An 858-amino-acid chain; its full sequence is Elongation factor 2 (858 aa).

Residues 17-362 enclose the tr-type G domain; sequence ANIRNMSVIA…MITIHLPSPV (346 aa). 26–33 contacts GTP; the sequence is AHVDHGKS. Threonine 54 is subject to Phosphothreonine. Threonine 57 carries the post-translational modification Phosphothreonine; by EEF2K. Residue threonine 59 is modified to Phosphothreonine. Position 152 is an N6-succinyllysine (lysine 152). GTP-binding positions include 158-161 and 216-218; these read NKMD and SGL. Lysine 235 bears the N6-acetyllysine mark. At lysine 239 the chain carries N6-acetyllysine; alternate. Residue lysine 239 forms a Glycyl lysine isopeptide (Lys-Gly) (interchain with G-Cter in SUMO1); alternate linkage. Position 265 is a phosphotyrosine; by CSK (tyrosine 265). Lysine 272 carries the post-translational modification N6-acetyllysine; alternate. Lysine 272 bears the N6-succinyllysine; alternate mark. At lysine 275 the chain carries N6-acetyllysine. A Glycyl lysine isopeptide (Lys-Gly) (interchain with G-Cter in SUMO) cross-link involves residue lysine 322. Serine 325 is subject to Phosphoserine. Residue tyrosine 373 is modified to Phosphotyrosine; by CSK. Phosphothreonine is present on threonine 435. Residues lysine 439 and lysine 445 each carry the N6-acetyllysine modification. Serine 502 bears the Phosphoserine mark. Lysine 525 carries the post-translational modification N6,N6,N6-trimethyllysine; by EEF2KMT. Lysine 529 is covalently cross-linked (Glycyl lysine isopeptide (Lys-Gly) (interchain with G-Cter in SUMO)). Lysine 572 is subject to N6-succinyllysine. Serine 595 is modified (phosphoserine; by CDK2). Lysine 619 carries the post-translational modification N6-acetyllysine. The residue at position 715 (histidine 715) is a (Microbial infection) ADP-ribosyldiphthamide. Position 715 is a diphthamide (histidine 715).

It belongs to the TRAFAC class translation factor GTPase superfamily. Classic translation factor GTPase family. EF-G/EF-2 subfamily. As to quaternary structure, binds to 80S ribosomes. Actively translating ribosomes show mutually exclusive binding of eIF5a (EIF5A or EIF5A2) and EEF2/eEF2. Interacts with SERBP1; interaction sequesters EEF2/eEF2 at the A-site of the ribosome, thereby blocking the interaction sites of the mRNA-tRNA complex, promoting ribosome stabilization and hibernation. Interacts with HABP4; interaction takes place at the A-site of hibernating ribosomes and promotes ribosome stabilization. Component of the mRNA surveillance SURF complex, at least composed of ERF1, ERF3 (ERF3A or ERF3B), EEF2, UPF1/RENT1, SMG1, SMG8 and SMG9. Interacts with RBPMS2. Phosphorylation by EF-2 kinase completely inactivates EF-2; it requires prior phosphorylation by CDK2 at Ser-595 during mitotic prometaphase. Phosphorylation by CSK promotes SUMOylation, proteolytic cleavage, and nuclear translocation if the C-terminal fragment. Post-translationally, diphthamide is 2-[3-carboxyamido-3-(trimethyl-ammonio)propyl]histidine. In terms of processing, (Microbial infection) Diphthamide can be ADP-ribosylated by diphtheria toxin and by Pseudomonas exotoxin A, thus arresting protein synthesis. ISGylated. Post-translationally, proteolytically processed at two sites following phosphorylation by CSK. In terms of processing, SUMOylated following phosphorylation by CSK, promotes proteolytic cleavage.

Its subcellular location is the cytoplasm. The protein resides in the nucleus. It catalyses the reaction GTP + H2O = GDP + phosphate + H(+). Catalyzes the GTP-dependent ribosomal translocation step during translation elongation. During this step, the ribosome changes from the pre-translocational (PRE) to the post-translocational (POST) state as the newly formed A-site-bound peptidyl-tRNA and P-site-bound deacylated tRNA move to the P and E sites, respectively. Catalyzes the coordinated movement of the two tRNA molecules, the mRNA and conformational changes in the ribosome. The chain is Elongation factor 2 (EEF2) from Cricetulus griseus (Chinese hamster).